Reading from the N-terminus, the 92-residue chain is Small ribosomal subunit protein uS19 (92 aa).

The protein belongs to the universal ribosomal protein uS19 family.

Its function is as follows. Protein S19 forms a complex with S13 that binds strongly to the 16S ribosomal RNA. The chain is Small ribosomal subunit protein uS19 from Borrelia duttonii (strain Ly).